Reading from the N-terminus, the 1108-residue chain is Retinal guanylyl cyclase 1 (1108 aa).

The N-terminal stretch at 1–54 is a signal peptide; sequence MSAWLLPAGGFPGAGFCIPAWQSRSSLSRVLRWPGPGLPGLLLLLLLPSPSAFS. Residues 55–465 are Extracellular-facing; that stretch reads AVFKVGVLGP…PDVICNGGVE (411 aa). A disulfide bond links cysteine 108 and cysteine 136. Asparagine 300 carries an N-linked (GlcNAc...) asparagine glycan. Residues 466–490 traverse the membrane as a helical segment; sequence PGLVFVGFLLVIVVGLTGAFLAHYL. Residues 491 to 1108 are Cytoplasmic-facing; that stretch reads RHRLLHMQMV…KARPGQFTGK (618 aa). Positions 520-552 are disordered; that stretch reads GGSSRKVAQGSRSSLATRSTSDIRSVPSQPQES. One can recognise a Protein kinase domain in the interval 520-811; sequence GGSSRKVAQG…DLTFDLFKGI (292 aa). Residues 529-552 are compositionally biased toward polar residues; it reads GSRSSLATRSTSDIRSVPSQPQES. A Guanylate cyclase domain is found at 883–1013; the sequence is TLYFSDIVGF…DTVNTASRME (131 aa). The interval 1069 to 1108 is disordered; the sequence is IPKPPDLQPGASNHGISLQEIPPERRKKLEKARPGQFTGK.

This sequence belongs to the adenylyl cyclase class-4/guanylyl cyclase family. As to quaternary structure, homodimer; requires homodimerization for guanylyl cyclase activity. Interacts (via C-terminus) with RD3 (via C-terminus); promotes the exit of GUCY2E from the endoplasmic reticulum and its trafficking to the photoreceptor outer segments. Interaction with RD3 negatively regulates GUCY2E guanylate cyclase activity. In terms of processing, there are 9 conserved cysteine residues in sensory guanylate cyclases, 6 in the extracellular domain, which may be involved in intra- or interchain disulfide bonds. Expressed in retina and enriched in photoreceptor outer segments.

The protein localises to the membrane. Its subcellular location is the photoreceptor outer segment membrane. It is found in the endoplasmic reticulum membrane. It catalyses the reaction GTP = 3',5'-cyclic GMP + diphosphate. With respect to regulation, activated by GUCA1A when free calcium ions concentration is low, and inhibited by GUCA1A when free calcium ions concentration is high. Negatively regulated by RD3; inhibits the basal and GUCA1A-stimulated guanylate cyclase activity. Functionally, catalyzes the synthesis of cyclic GMP (cGMP) in rods and cones of photoreceptors. Plays an essential role in phototransduction, by mediating cGMP replenishment. May also participate in the trafficking of membrane-asociated proteins to the photoreceptor outer segment membrane. The protein is Retinal guanylyl cyclase 1 (Gucy2e) of Rattus norvegicus (Rat).